The chain runs to 341 residues: Phosphate acyltransferase (341 aa).

Belongs to the PlsX family. As to quaternary structure, homodimer. Probably interacts with PlsY.

The protein localises to the cytoplasm. The catalysed reaction is a fatty acyl-[ACP] + phosphate = an acyl phosphate + holo-[ACP]. The protein operates within lipid metabolism; phospholipid metabolism. Catalyzes the reversible formation of acyl-phosphate (acyl-PO(4)) from acyl-[acyl-carrier-protein] (acyl-ACP). This enzyme utilizes acyl-ACP as fatty acyl donor, but not acyl-CoA. This chain is Phosphate acyltransferase, found in Nostoc sp. (strain PCC 7120 / SAG 25.82 / UTEX 2576).